The following is a 200-amino-acid chain: ATP-dependent Clp protease proteolytic subunit 2 (200 aa).

Ser99 serves as the catalytic Nucleophile. His123 is an active-site residue.

This sequence belongs to the peptidase S14 family. In terms of assembly, fourteen ClpP subunits assemble into 2 heptameric rings which stack back to back to give a disk-like structure with a central cavity, resembling the structure of eukaryotic proteasomes.

It is found in the cytoplasm. It catalyses the reaction Hydrolysis of proteins to small peptides in the presence of ATP and magnesium. alpha-casein is the usual test substrate. In the absence of ATP, only oligopeptides shorter than five residues are hydrolyzed (such as succinyl-Leu-Tyr-|-NHMec, and Leu-Tyr-Leu-|-Tyr-Trp, in which cleavage of the -Tyr-|-Leu- and -Tyr-|-Trp bonds also occurs).. Functionally, cleaves peptides in various proteins in a process that requires ATP hydrolysis. Has a chymotrypsin-like activity. Plays a major role in the degradation of misfolded proteins. This is ATP-dependent Clp protease proteolytic subunit 2 from Symbiobacterium thermophilum (strain DSM 24528 / JCM 14929 / IAM 14863 / T).